A 305-amino-acid chain; its full sequence is Ribosomal RNA small subunit methyltransferase H (305 aa).

S-adenosyl-L-methionine-binding positions include 30-32 (GGH), Asp49, Phe74, Asp96, and Gln103.

This sequence belongs to the methyltransferase superfamily. RsmH family.

Its subcellular location is the cytoplasm. It carries out the reaction cytidine(1402) in 16S rRNA + S-adenosyl-L-methionine = N(4)-methylcytidine(1402) in 16S rRNA + S-adenosyl-L-homocysteine + H(+). Functionally, specifically methylates the N4 position of cytidine in position 1402 (C1402) of 16S rRNA. The protein is Ribosomal RNA small subunit methyltransferase H of Francisella tularensis subsp. novicida (strain U112).